The primary structure comprises 51 residues: MARFPEAEARIFRKLVCMRCGATNPWGAKKCRKCGYKGLRPKAREPRGGGR.

Zn(2+) contacts are provided by cysteine 17, cysteine 20, cysteine 31, and cysteine 34.

It belongs to the eukaryotic ribosomal protein eL40 family. As to quaternary structure, part of the 50S ribosomal subunit. It depends on Zn(2+) as a cofactor.

The protein is Large ribosomal subunit protein eL40 of Thermococcus kodakarensis (strain ATCC BAA-918 / JCM 12380 / KOD1) (Pyrococcus kodakaraensis (strain KOD1)).